The following is a 412-amino-acid chain: Multifunctional CCA protein (412 aa).

Positions 8 and 11 each coordinate ATP. Residues G8 and R11 each contribute to the CTP site. D21 and D23 together coordinate Mg(2+). ATP is bound by residues R91, R137, and R140. CTP-binding residues include R91, R137, and R140. The region spanning T228 to W329 is the HD domain.

Belongs to the tRNA nucleotidyltransferase/poly(A) polymerase family. Bacterial CCA-adding enzyme type 1 subfamily. In terms of assembly, monomer. Can also form homodimers and oligomers. The cofactor is Mg(2+). Ni(2+) serves as cofactor.

It carries out the reaction a tRNA precursor + 2 CTP + ATP = a tRNA with a 3' CCA end + 3 diphosphate. It catalyses the reaction a tRNA with a 3' CCA end + 2 CTP + ATP = a tRNA with a 3' CCACCA end + 3 diphosphate. In terms of biological role, catalyzes the addition and repair of the essential 3'-terminal CCA sequence in tRNAs without using a nucleic acid template. Adds these three nucleotides in the order of C, C, and A to the tRNA nucleotide-73, using CTP and ATP as substrates and producing inorganic pyrophosphate. tRNA 3'-terminal CCA addition is required both for tRNA processing and repair. Also involved in tRNA surveillance by mediating tandem CCA addition to generate a CCACCA at the 3' terminus of unstable tRNAs. While stable tRNAs receive only 3'-terminal CCA, unstable tRNAs are marked with CCACCA and rapidly degraded. The chain is Multifunctional CCA protein from Escherichia coli (strain SMS-3-5 / SECEC).